The chain runs to 171 residues: Small ribosomal subunit protein uS13 (171 aa).

Disordered regions lie at residues 1–22 (MGKA…AAKK) and 142–171 (RHEK…RKKE). Positions 10–22 (KSDKEAAKPAAKK) are enriched in basic and acidic residues. The span at 142–158 (RHEKGKKVRGQRTRSNG) shows a compositional bias: basic residues.

It belongs to the universal ribosomal protein uS13 family. Part of the 30S ribosomal subunit. Forms a loose heterodimer with protein S19. Forms two bridges to the 50S subunit in the 70S ribosome.

In terms of biological role, located at the top of the head of the 30S subunit, it contacts several helices of the 16S rRNA. In the 70S ribosome it contacts the 23S rRNA (bridge B1a) and protein L5 of the 50S subunit (bridge B1b), connecting the 2 subunits; these bridges are implicated in subunit movement. In Thermoplasma volcanium (strain ATCC 51530 / DSM 4299 / JCM 9571 / NBRC 15438 / GSS1), this protein is Small ribosomal subunit protein uS13.